An 81-amino-acid polypeptide reads, in one-letter code: Large ribosomal subunit protein bL31 (81 aa).

It belongs to the bacterial ribosomal protein bL31 family. Type A subfamily. Part of the 50S ribosomal subunit.

In terms of biological role, binds the 23S rRNA. The protein is Large ribosomal subunit protein bL31 of Synechocystis sp. (strain ATCC 27184 / PCC 6803 / Kazusa).